The following is a 186-amino-acid chain: Large ribosomal subunit protein bL17 (186 aa).

Residues 123–186 form a disordered region; the sequence is SEADRARRVK…ADEAEGSSED (64 aa). Low complexity predominate over residues 139-177; that stretch reads EAAAAAPQAAVEPEAVEAAPAPDAPEAAPEAEAAAPQPA.

Belongs to the bacterial ribosomal protein bL17 family. As to quaternary structure, part of the 50S ribosomal subunit. Contacts protein L32.

This chain is Large ribosomal subunit protein bL17, found in Mycobacterium avium (strain 104).